The sequence spans 360 residues: Heat-inducible transcription repressor HrcA (360 aa).

Belongs to the HrcA family.

In terms of biological role, negative regulator of class I heat shock genes (grpE-dnaK-dnaJ and groELS operons). Prevents heat-shock induction of these operons. The chain is Heat-inducible transcription repressor HrcA from Mesorhizobium japonicum (strain LMG 29417 / CECT 9101 / MAFF 303099) (Mesorhizobium loti (strain MAFF 303099)).